Consider the following 152-residue polypeptide: SsrA-binding protein (152 aa).

This sequence belongs to the SmpB family.

The protein resides in the cytoplasm. Functionally, required for rescue of stalled ribosomes mediated by trans-translation. Binds to transfer-messenger RNA (tmRNA), required for stable association of tmRNA with ribosomes. tmRNA and SmpB together mimic tRNA shape, replacing the anticodon stem-loop with SmpB. tmRNA is encoded by the ssrA gene; the 2 termini fold to resemble tRNA(Ala) and it encodes a 'tag peptide', a short internal open reading frame. During trans-translation Ala-aminoacylated tmRNA acts like a tRNA, entering the A-site of stalled ribosomes, displacing the stalled mRNA. The ribosome then switches to translate the ORF on the tmRNA; the nascent peptide is terminated with the 'tag peptide' encoded by the tmRNA and targeted for degradation. The ribosome is freed to recommence translation, which seems to be the essential function of trans-translation. The sequence is that of SsrA-binding protein from Rickettsia montanensis.